Here is a 316-residue protein sequence, read N- to C-terminus: CD-NTase-associated protein 12 (316 aa).

One can recognise a TIR domain in the interval 4-121 (RIFIGSSSEG…MLGITQTRYE (118 aa)). An STING domain region spans residues 161–316 (STVIAISYFE…ECVEIIEPQP (156 aa)). Residues Phe-172, Pro-237, and Asp-253 each coordinate 3',3'-c-di-GMP.

It in the C-terminal section; belongs to the bacterial STING family. In terms of assembly, forms homodimers; in the presence of c-di-GMP forms filaments with an ordered array of parallel-stacked subunits.

The catalysed reaction is NAD(+) + H2O = ADP-D-ribose + nicotinamide + H(+). With respect to regulation, NAD(+) hydrolase activity is strongly stimulated by c-di-GMP, weakly by 3'3'-cGAMP, very weakly by c-di-AMP but not at all by 2'3'-cGAMP. Self-association of TIR domains is required for NADase activity. In terms of biological role, effector protein of a CBASS antiviral system with NAD(+) hydrolase activity. CBASS (cyclic oligonucleotide-based antiphage signaling system) provides immunity against bacteriophage. The CD-NTase protein synthesizes cyclic nucleotides in response to infection; these serve as specific second messenger signals. The signals activate a diverse range of effectors, leading to bacterial cell death and thus abortive phage infection. A type I-D(GG) CBASS system. Binds c-di-GMP (synthesized by the cognate CdnE encoded upstream in the same operon) but not c-di-AMP, 2'-3'-cGAMP, 3'-3'-cGAMP or cUMP-AMP (tested without the N-terminal TIR domain). Upon activation by c-di-GMP forms filaments which hydrolyze NAD(+); filament formation is required for enzyme activation. The sequence is that of CD-NTase-associated protein 12 from Lachnospiraceae bacterium (strain RUG226).